The primary structure comprises 421 residues: Medium-chain specific acyl-CoA dehydrogenase, mitochondrial (421 aa).

Residues 1–25 (MAAGFGRCCRVLRSISRFHWRSQHT) constitute a mitochondrion transit peptide. Residue Lys-69 is modified to N6-acetyllysine; alternate. The residue at position 69 (Lys-69) is an N6-succinyllysine; alternate. Residue 158–167 (YCVTEPGAGS) coordinates FAD. Ser-167 lines the octanoyl-CoA pocket. Position 179 is an N6-succinyllysine (Lys-179). Residue 191 to 193 (WIT) participates in FAD binding. An N6-acetyllysine; alternate mark is found at Lys-212, Lys-217, Lys-259, and Lys-271. 4 positions are modified to N6-succinyllysine; alternate: Lys-212, Lys-217, Lys-259, and Lys-271. Asp-278 is an octanoyl-CoA binding site. Position 279 is an N6-acetyllysine (Lys-279). Residue Arg-281 coordinates octanoyl-CoA. Lys-301 is subject to N6-acetyllysine. Residues 306–308 (RKT) and 316–317 (HQ) contribute to the FAD site. Thr-351 is modified (phosphothreonine). Residues 374–378 (QILGG) and 401–405 (EGTSQ) contribute to the FAD site. Glu-401 contributes to the octanoyl-CoA binding site. Glu-401 serves as the catalytic Proton acceptor.

This sequence belongs to the acyl-CoA dehydrogenase family. As to quaternary structure, homotetramer. Interacts with the heterodimeric electron transfer flavoprotein ETF. FAD is required as a cofactor. Post-translationally, acetylated. Could occur at proximity of the cofactor-binding sites and reduce the catalytic activity. Could be deacetylated by SIRT3.

It is found in the mitochondrion matrix. It carries out the reaction a medium-chain 2,3-saturated fatty acyl-CoA + oxidized [electron-transfer flavoprotein] + H(+) = a medium-chain (2E)-enoyl-CoA + reduced [electron-transfer flavoprotein]. It catalyses the reaction pentanoyl-CoA + oxidized [electron-transfer flavoprotein] + H(+) = (2E)-pentenoyl-CoA + reduced [electron-transfer flavoprotein]. The catalysed reaction is hexanoyl-CoA + oxidized [electron-transfer flavoprotein] + H(+) = (2E)-hexenoyl-CoA + reduced [electron-transfer flavoprotein]. The enzyme catalyses octanoyl-CoA + oxidized [electron-transfer flavoprotein] + H(+) = (2E)-octenoyl-CoA + reduced [electron-transfer flavoprotein]. It carries out the reaction decanoyl-CoA + oxidized [electron-transfer flavoprotein] + H(+) = (2E)-decenoyl-CoA + reduced [electron-transfer flavoprotein]. It catalyses the reaction dodecanoyl-CoA + oxidized [electron-transfer flavoprotein] + H(+) = (2E)-dodecenoyl-CoA + reduced [electron-transfer flavoprotein]. The catalysed reaction is tetradecanoyl-CoA + oxidized [electron-transfer flavoprotein] + H(+) = (2E)-tetradecenoyl-CoA + reduced [electron-transfer flavoprotein]. The enzyme catalyses oxidized [electron-transfer flavoprotein] + hexadecanoyl-CoA + H(+) = (2E)-hexadecenoyl-CoA + reduced [electron-transfer flavoprotein]. Its pathway is lipid metabolism; mitochondrial fatty acid beta-oxidation. In terms of biological role, medium-chain specific acyl-CoA dehydrogenase is one of the acyl-CoA dehydrogenases that catalyze the first step of mitochondrial fatty acid beta-oxidation, an aerobic process breaking down fatty acids into acetyl-CoA and allowing the production of energy from fats. The first step of fatty acid beta-oxidation consists in the removal of one hydrogen from C-2 and C-3 of the straight-chain fatty acyl-CoA thioester, resulting in the formation of trans-2-enoyl-CoA. Electron transfer flavoprotein (ETF) is the electron acceptor that transfers electrons to the main mitochondrial respiratory chain via ETF-ubiquinone oxidoreductase (ETF dehydrogenase). Among the different mitochondrial acyl-CoA dehydrogenases, medium-chain specific acyl-CoA dehydrogenase acts specifically on acyl-CoAs with saturated 6 to 12 carbons long primary chains. The polypeptide is Medium-chain specific acyl-CoA dehydrogenase, mitochondrial (Homo sapiens (Human)).